Here is a 404-residue protein sequence, read N- to C-terminus: MKYSAVLVAALAAIADATIPIPKGGVPGQPIQESGKGAVFSGGTNNQLDLQNPSNIGGQPATDNGLVPNMKWSFSLSKTRMLYGGWIREQVIQDLPTSHDIAGAQVHLIKGGIRQMHWHRVAEWAYIYAGSFLISAVTEDGQFQLDKLGVGDMYYFPKGAAHSLQGLEDENEILLIFDDGDFDRVGTTFMVADWISHTPKDVLAKNFGVPPSTFDKTYNPDLALINSTISTKTVEGGNGALTGNSSYTFHISNAPEIQVPGGGGTIQVVDSKNFPVSKTIACAVVRLKPGGMRELHWHPTAEEWLYFHSGNARATVYIGGGLARTFDFTAGDAGVFPDNSGHYIENTSETEELIYLELYKADRVADVSLSQWLALTPSDIAAAAINVPIEVIEQIKKEKQYIVS.

The signal sequence occupies residues 1–17 (MKYSAVLVAALAAIADA). The Cupin type-1 1 domain maps to 74 to 215 (FSLSKTRMLY…NFGVPPSTFD (142 aa)). Mn(2+) contacts are provided by H117, H119, E123, and H162. N-linked (GlcNAc...) asparagine glycans are attached at residues N226 and N244. The 145-residue stretch at 249-393 (FHISNAPEIQ…AINVPIEVIE (145 aa)) folds into the Cupin type-1 2 domain. 4 residues coordinate Mn(2+): H296, H298, E303, and H342. N346 carries N-linked (GlcNAc...) asparagine glycosylation. The Proton donor role is filled by E357.

Mn(2+) is required as a cofactor.

It localises to the secreted. The enzyme catalyses oxalate + H(+) = formate + CO2. Functionally, converts oxalate to formate and CO(2) in an O(2)-dependent reaction. Can also catalyze minor side reactions: oxalate oxidation to produce H(2)O(2), and oxalate-dependent, H(2)O(2)-independent dye oxidations. This chain is Probable oxalate decarboxylase ARB_04859, found in Arthroderma benhamiae (strain ATCC MYA-4681 / CBS 112371) (Trichophyton mentagrophytes).